The primary structure comprises 207 residues: MTKATIVLATRNAGKVAELADALRAYGLDVLGLDAFPQVGEIEETGTTFEENALLKARAVAEATGHVAVADDSGLEVDALERRPGVYSARYSDDTPDLPGDTRDARNNAKLLLELDGVPAERRTARFRCVMAACTPDGRHVFAEGAWEGHIALAPEGDNGFGYDPLFIDPQSGLHSAQLSRDEKNARSHRGKALRRLLELWPAFWRG.

10–15 (TRNAGK) serves as a coordination point for substrate. Positions 43 and 72 each coordinate Mg(2+). The Proton acceptor role is filled by aspartate 72. Residues serine 73, 161 to 164 (FGYD), lysine 184, and 189 to 190 (HR) each bind substrate.

The protein belongs to the HAM1 NTPase family. In terms of assembly, homodimer. The cofactor is Mg(2+).

The catalysed reaction is XTP + H2O = XMP + diphosphate + H(+). It carries out the reaction dITP + H2O = dIMP + diphosphate + H(+). The enzyme catalyses ITP + H2O = IMP + diphosphate + H(+). Its function is as follows. Pyrophosphatase that catalyzes the hydrolysis of nucleoside triphosphates to their monophosphate derivatives, with a high preference for the non-canonical purine nucleotides XTP (xanthosine triphosphate), dITP (deoxyinosine triphosphate) and ITP. Seems to function as a house-cleaning enzyme that removes non-canonical purine nucleotides from the nucleotide pool, thus preventing their incorporation into DNA/RNA and avoiding chromosomal lesions. This Nitratidesulfovibrio vulgaris (strain ATCC 29579 / DSM 644 / CCUG 34227 / NCIMB 8303 / VKM B-1760 / Hildenborough) (Desulfovibrio vulgaris) protein is dITP/XTP pyrophosphatase.